The following is a 517-amino-acid chain: Probable anion transporter 6, chloroplastic (517 aa).

A disordered region spans residues 51–73 (TERVRESKKLPPKDPIEDPKPQL). Basic and acidic residues predominate over residues 52–70 (ERVRESKKLPPKDPIEDPK). A run of 10 helical transmembrane segments spans residues 130–150 (FGWS…GYAL), 170–190 (IGVF…GFMP), 229–249 (FVFG…PPII), 255–275 (ESVF…FQFL), 312–332 (SFFQ…GSWG), 352–372 (LTEA…VTSL), 397–417 (IAFV…GLPP), 420–440 (IVGI…GLYC), 452–472 (ILLG…VALT), and 484–504 (MSLF…WLAF).

The protein belongs to the major facilitator superfamily. Sodium/anion cotransporter (TC 2.A.1.14) family. Expressed in leaf veins and sepals.

The protein resides in the plastid. The protein localises to the chloroplast membrane. Its function is as follows. Inorganic phosphate and probable anion transporter. The protein is Probable anion transporter 6, chloroplastic (ANTR6) of Arabidopsis thaliana (Mouse-ear cress).